The chain runs to 483 residues: Bromoperoxidase-catalase (483 aa).

The tract at residues 1–24 (MTQGPLTTEAGAPVADNQNSETAG) is disordered. Catalysis depends on residues H54 and N127. Y337 contributes to the heme binding site.

Belongs to the catalase family.

It carries out the reaction 2 H2O2 = O2 + 2 H2O. In Streptomyces venezuelae (strain ATCC 10712 / CBS 650.69 / DSM 40230 / JCM 4526 / NBRC 13096 / PD 04745), this protein is Bromoperoxidase-catalase (bca).